We begin with the raw amino-acid sequence, 606 residues long: Aspartate--tRNA(Asp/Asn) ligase (606 aa).

Residue Glu177 participates in L-aspartate binding. Positions 201 to 204 are aspartate; that stretch reads QIFK. Arg223 contributes to the L-aspartate binding site. Residues 223 to 225 and Gln232 contribute to the ATP site; that span reads RDE. His461 contacts L-aspartate. Glu499 contributes to the ATP binding site. Arg506 is an L-aspartate binding site. 551-554 contributes to the ATP binding site; sequence GLDR.

It belongs to the class-II aminoacyl-tRNA synthetase family. Type 1 subfamily. As to quaternary structure, homodimer.

It localises to the cytoplasm. The enzyme catalyses tRNA(Asx) + L-aspartate + ATP = L-aspartyl-tRNA(Asx) + AMP + diphosphate. Functionally, aspartyl-tRNA synthetase with relaxed tRNA specificity since it is able to aspartylate not only its cognate tRNA(Asp) but also tRNA(Asn). Reaction proceeds in two steps: L-aspartate is first activated by ATP to form Asp-AMP and then transferred to the acceptor end of tRNA(Asp/Asn). The protein is Aspartate--tRNA(Asp/Asn) ligase of Prochlorococcus marinus (strain MIT 9211).